We begin with the raw amino-acid sequence, 1175 residues long: DNA-directed RNA polymerase subunit beta (1175 aa).

Positions 12–33 (QSKTDRPQSSSNGSSSLNGSVP) are disordered. Low complexity predominate over residues 20-31 (SSSNGSSSLNGS).

It belongs to the RNA polymerase beta chain family. As to quaternary structure, the RNAP catalytic core consists of 2 alpha, 1 beta, 1 beta' and 1 omega subunit. When a sigma factor is associated with the core the holoenzyme is formed, which can initiate transcription.

It catalyses the reaction RNA(n) + a ribonucleoside 5'-triphosphate = RNA(n+1) + diphosphate. DNA-dependent RNA polymerase catalyzes the transcription of DNA into RNA using the four ribonucleoside triphosphates as substrates. The polypeptide is DNA-directed RNA polymerase subunit beta (Mycobacterium avium (strain 104)).